A 598-amino-acid polypeptide reads, in one-letter code: Mitochondrial distribution and morphology protein 30 (598 aa).

The 47-residue stretch at 13-59 (SFTIDHLPPEIWLCISKLVGTSDLHNLCLINRRLYLTITSDEIWKRR) folds into the F-box domain.

As to quaternary structure, interacts with SKP1. Component of the probable SCF(MDM30) complex containing CDC53, SKP1, RBX1 and MDM30. Interacts with SKP1 and FZO1.

It localises to the cytoplasm. The protein localises to the mitochondrion. It participates in protein modification; protein ubiquitination. Functionally, substrate recognition component of a SCF (SKP1-CUL1-F-box protein) E3 ubiquitin-protein ligase complex which mediates the ubiquitination and subsequent proteasomal degradation of target proteins. Probably recognizes and binds to phosphorylated target proteins. Recognizes FZO1 and regulates the amount of FZO1. Regulatory factor for the mitochondrial fusion machinery. Required for mitochondrial DNA maintenance. This chain is Mitochondrial distribution and morphology protein 30 (MDM30), found in Saccharomyces cerevisiae (strain ATCC 204508 / S288c) (Baker's yeast).